A 168-amino-acid polypeptide reads, in one-letter code: Plastocyanin, chloroplastic (168 aa).

The region spanning 70–168 (VEVLLGGGDG…AGMVGKVTVN (99 aa)) is the Plastocyanin-like domain. The Cu cation site is built by H106, C153, H156, and M161.

The protein belongs to the plastocyanin family. It depends on Cu(2+) as a cofactor.

Its subcellular location is the plastid. It is found in the chloroplast thylakoid membrane. Participates in electron transfer between P700 and the cytochrome b6-f complex in photosystem I. This chain is Plastocyanin, chloroplastic (PETE), found in Spinacia oleracea (Spinach).